The sequence spans 460 residues: Argininosuccinate lyase (460 aa).

It belongs to the lyase 1 family. Argininosuccinate lyase subfamily.

The protein resides in the cytoplasm. The catalysed reaction is 2-(N(omega)-L-arginino)succinate = fumarate + L-arginine. It functions in the pathway amino-acid biosynthesis; L-arginine biosynthesis; L-arginine from L-ornithine and carbamoyl phosphate: step 3/3. The protein is Argininosuccinate lyase of Desulforamulus reducens (strain ATCC BAA-1160 / DSM 100696 / MI-1) (Desulfotomaculum reducens).